Here is a 156-residue protein sequence, read N- to C-terminus: ATP synthase subunit b (156 aa).

A helical transmembrane segment spans residues 7-29 (LLGQAISFALFVWFCMKYVWPPL).

This sequence belongs to the ATPase B chain family. As to quaternary structure, F-type ATPases have 2 components, F(1) - the catalytic core - and F(0) - the membrane proton channel. F(1) has five subunits: alpha(3), beta(3), gamma(1), delta(1), epsilon(1). F(0) has three main subunits: a(1), b(2) and c(10-14). The alpha and beta chains form an alternating ring which encloses part of the gamma chain. F(1) is attached to F(0) by a central stalk formed by the gamma and epsilon chains, while a peripheral stalk is formed by the delta and b chains.

Its subcellular location is the cell inner membrane. Its function is as follows. F(1)F(0) ATP synthase produces ATP from ADP in the presence of a proton or sodium gradient. F-type ATPases consist of two structural domains, F(1) containing the extramembraneous catalytic core and F(0) containing the membrane proton channel, linked together by a central stalk and a peripheral stalk. During catalysis, ATP synthesis in the catalytic domain of F(1) is coupled via a rotary mechanism of the central stalk subunits to proton translocation. Functionally, component of the F(0) channel, it forms part of the peripheral stalk, linking F(1) to F(0). The chain is ATP synthase subunit b from Vibrio alginolyticus.